A 109-amino-acid chain; its full sequence is DNA-binding protein Mpal_0536 (109 aa).

The disordered stretch occupies residues 14 to 35; it reads MAQLQSQQMDQQQMDEEKQRAK. A compositionally biased stretch (low complexity) spans 16–25; the sequence is QLQSQQMDQQ.

Belongs to the PDCD5 family.

The sequence is that of DNA-binding protein Mpal_0536 from Methanosphaerula palustris (strain ATCC BAA-1556 / DSM 19958 / E1-9c).